Consider the following 350-residue polypeptide: Peptide-N(4)-(N-acetyl-beta-glucosaminyl)asparagine amidase (350 aa).

Residues Cys-123, Cys-126, Cys-157, and Cys-160 each coordinate Zn(2+). Cys-183 serves as the catalytic Nucleophile. Residues His-210 and Asp-227 contribute to the active site. Residue Glu-230 participates in substrate binding. Residues 324–350 (EIPPAAGAAGRQSGSADWKRQRGEDGR) are disordered. The span at 340–350 (DWKRQRGEDGR) shows a compositional bias: basic and acidic residues.

The protein belongs to the transglutaminase-like superfamily. PNGase family. Requires Zn(2+) as cofactor.

Its subcellular location is the cytoplasm. It catalyses the reaction Hydrolysis of an N(4)-(acetyl-beta-D-glucosaminyl)asparagine residue in which the glucosamine residue may be further glycosylated, to yield a (substituted) N-acetyl-beta-D-glucosaminylamine and a peptide containing an aspartate residue.. Specifically deglycosylates the denatured form of N-linked glycoproteins in the cytoplasm and assists their proteasome-mediated degradation. Cleaves the beta-aspartyl-glucosamine (GlcNAc) of the glycan and the amide side chain of Asn, converting Asn to Asp. Prefers proteins containing high-mannose over those bearing complex type oligosaccharides. Can recognize misfolded proteins in the endoplasmic reticulum that are exported to the cytosol to be destroyed and deglycosylate them, while it has no activity toward native proteins. Deglycosylation is a prerequisite for subsequent proteasome-mediated degradation of some, but not all, misfolded glycoproteins. The protein is Peptide-N(4)-(N-acetyl-beta-glucosaminyl)asparagine amidase (PNG1) of Eremothecium gossypii (strain ATCC 10895 / CBS 109.51 / FGSC 9923 / NRRL Y-1056) (Yeast).